A 543-amino-acid polypeptide reads, in one-letter code: Carboxypeptidase Y homolog A (543 aa).

Positions 1 to 17 (MKVATSALLVGAVSASV) are cleaved as a signal peptide. A propeptide spanning residues 18–128 (GPQQQVLKFP…KLENYSMRTK (111 aa)) is cleaved from the precursor. N-linked (GlcNAc...) asparagine glycosylation is found at asparagine 122 and asparagine 213. 5 disulfide bridges follow: cysteine 182/cysteine 421, cysteine 316/cysteine 330, cysteine 340/cysteine 363, cysteine 347/cysteine 356, and cysteine 385/cysteine 391. Residue serine 269 is part of the active site. Residue aspartate 460 is part of the active site. Residue asparagine 508 is glycosylated (N-linked (GlcNAc...) asparagine). Histidine 519 is a catalytic residue.

It belongs to the peptidase S10 family.

It is found in the vacuole. The enzyme catalyses Release of a C-terminal amino acid with broad specificity.. In terms of biological role, vacuolar carboxypeptidase involved in degradation of small peptides. Digests preferentially peptides containing an aliphatic or hydrophobic residue in P1' position, as well as methionine, leucine or phenylalanine in P1 position of ester substrate. This is Carboxypeptidase Y homolog A (CPYA) from Leptosphaeria maculans (strain JN3 / isolate v23.1.3 / race Av1-4-5-6-7-8) (Blackleg fungus).